Consider the following 316-residue polypeptide: Pantothenate kinase (316 aa).

95–102 (GSVAVGKS) is an ATP binding site.

Belongs to the prokaryotic pantothenate kinase family.

Its subcellular location is the cytoplasm. The catalysed reaction is (R)-pantothenate + ATP = (R)-4'-phosphopantothenate + ADP + H(+). It functions in the pathway cofactor biosynthesis; coenzyme A biosynthesis; CoA from (R)-pantothenate: step 1/5. In Erwinia tasmaniensis (strain DSM 17950 / CFBP 7177 / CIP 109463 / NCPPB 4357 / Et1/99), this protein is Pantothenate kinase.